A 192-amino-acid polypeptide reads, in one-letter code: Large ribosomal subunit protein uL18 (192 aa).

Belongs to the universal ribosomal protein uL18 family. As to quaternary structure, part of the 50S ribosomal subunit. Contacts the 5S and 23S rRNAs.

This is one of the proteins that bind and probably mediate the attachment of the 5S RNA into the large ribosomal subunit, where it forms part of the central protuberance. The polypeptide is Large ribosomal subunit protein uL18 (Methanothermobacter thermautotrophicus (strain ATCC 29096 / DSM 1053 / JCM 10044 / NBRC 100330 / Delta H) (Methanobacterium thermoautotrophicum)).